The primary structure comprises 67 residues: Prokaryotic ubiquitin-like protein Pup (67 aa).

The disordered stretch occupies residues 1 to 36 (MPQQFEQPQAQQAATQEDDALATTQAAAQTESADQA). Positions 23 to 61 (TTQAAAQTESADQADVLDDILDDIESTLETNAEEYVNSF) are ARC ATPase binding. Residue glutamate 67 forms an Isoglutamyl lysine isopeptide (Glu-Lys) (interchain with K-? in acceptor proteins) linkage.

Belongs to the prokaryotic ubiquitin-like protein family. Strongly interacts with the proteasome-associated ATPase ARC through a hydrophobic interface; the interacting region of Pup lies in its C-terminal half. There is one Pup binding site per ARC hexamer ring.

The protein operates within protein degradation; proteasomal Pup-dependent pathway. In terms of biological role, protein modifier that is covalently attached to lysine residues of substrate proteins, thereby targeting them for proteasomal degradation. The tagging system is termed pupylation. The protein is Prokaryotic ubiquitin-like protein Pup of Bifidobacterium longum (strain DJO10A).